The primary structure comprises 200 residues: ATP-dependent Clp protease proteolytic subunit 1 (200 aa).

Catalysis depends on serine 102, which acts as the Nucleophile. Histidine 127 is an active-site residue.

Belongs to the peptidase S14 family. In terms of assembly, fourteen ClpP subunits assemble into 2 heptameric rings which stack back to back to give a disk-like structure with a central cavity, resembling the structure of eukaryotic proteasomes.

The protein localises to the cytoplasm. The catalysed reaction is Hydrolysis of proteins to small peptides in the presence of ATP and magnesium. alpha-casein is the usual test substrate. In the absence of ATP, only oligopeptides shorter than five residues are hydrolyzed (such as succinyl-Leu-Tyr-|-NHMec, and Leu-Tyr-Leu-|-Tyr-Trp, in which cleavage of the -Tyr-|-Leu- and -Tyr-|-Trp bonds also occurs).. Functionally, cleaves peptides in various proteins in a process that requires ATP hydrolysis. Has a chymotrypsin-like activity. Plays a major role in the degradation of misfolded proteins. This Bradyrhizobium diazoefficiens (strain JCM 10833 / BCRC 13528 / IAM 13628 / NBRC 14792 / USDA 110) protein is ATP-dependent Clp protease proteolytic subunit 1.